The primary structure comprises 948 residues: Glycine dehydrogenase (decarboxylating) (948 aa).

At K696 the chain carries N6-(pyridoxal phosphate)lysine.

The protein belongs to the GcvP family. As to quaternary structure, the glycine cleavage system is composed of four proteins: P, T, L and H. Pyridoxal 5'-phosphate serves as cofactor.

It carries out the reaction N(6)-[(R)-lipoyl]-L-lysyl-[glycine-cleavage complex H protein] + glycine + H(+) = N(6)-[(R)-S(8)-aminomethyldihydrolipoyl]-L-lysyl-[glycine-cleavage complex H protein] + CO2. In terms of biological role, the glycine cleavage system catalyzes the degradation of glycine. The P protein binds the alpha-amino group of glycine through its pyridoxal phosphate cofactor; CO(2) is released and the remaining methylamine moiety is then transferred to the lipoamide cofactor of the H protein. This chain is Glycine dehydrogenase (decarboxylating), found in Akkermansia muciniphila (strain ATCC BAA-835 / DSM 22959 / JCM 33894 / BCRC 81048 / CCUG 64013 / CIP 107961 / Muc).